A 255-amino-acid chain; its full sequence is Pimeloyl-[acyl-carrier protein] methyl ester esterase (255 aa).

Substrate is bound by residues W18, 78-79 (SL), and 139-143 (FLALD). S78 (nucleophile) is an active-site residue. Catalysis depends on residues D203 and H233. H233 serves as a coordination point for substrate.

It belongs to the AB hydrolase superfamily. Carboxylesterase BioH family. In terms of assembly, monomer.

The protein localises to the cytoplasm. It catalyses the reaction 6-carboxyhexanoyl-[ACP] methyl ester + H2O = 6-carboxyhexanoyl-[ACP] + methanol + H(+). The protein operates within cofactor biosynthesis; biotin biosynthesis. Functionally, the physiological role of BioH is to remove the methyl group introduced by BioC when the pimeloyl moiety is complete. It allows to synthesize pimeloyl-ACP via the fatty acid synthetic pathway through the hydrolysis of the ester bonds of pimeloyl-ACP esters. This Xylella fastidiosa (strain M23) protein is Pimeloyl-[acyl-carrier protein] methyl ester esterase.